The primary structure comprises 479 residues: Neuronal acetylcholine receptor subunit alpha-9 (479 aa).

An N-terminal signal peptide occupies residues 1–25 (MNRPHSCLSFCWMYFAASGIRAVET). The Extracellular segment spans residues 26–237 (ANGKYAQKLF…TFTLLLKRRS (212 aa)). N-linked (GlcNAc...) asparagine glycosylation is present at N57. C155 and C169 are joined by a disulfide. N170 is a glycosylation site (N-linked (GlcNAc...) asparagine). S191 and D193 together coordinate Na(+). A disulfide bridge links C219 with C220. Transmembrane regions (helical) follow at residues 238 to 262 (SFYIVNLLIPCVLISFLAPLSFYLP), 269 to 287 (VSLGVTILLAMTVFQLMVA), and 302 to 323 (YYIATMALITASTALTIMVMNI). Topologically, residues 324–457 (HFCGAEARPV…WKKVAKVIDR (134 aa)) are cytoplasmic. The helical transmembrane segment at 458–476 (FFMWIFFAMVFVMTVLIIA) threads the bilayer.

Belongs to the ligand-gated ion channel (TC 1.A.9) family. Acetylcholine receptor (TC 1.A.9.1) subfamily. Alpha-9/CHRNA9 sub-subfamily. As to quaternary structure, forms homo- or heterooligomeric channels in conjunction with CHRNA10. The native outer hair cell receptor may be composed of CHRNA9:CHRNA10 heterooligomers. Found in the stoichiometric form (CHRNA9)2:(CHRNA10)3. In terms of tissue distribution, detected in the nasal epithelium, in the outer hair cells of the cochlea, in the pars tuberalis of the hypophysis, and in the developing muscle of the tongue. Also expressed in the neurons of dorsal root ganglia.

It localises to the synaptic cell membrane. It is found in the cell membrane. It carries out the reaction Ca(2+)(in) = Ca(2+)(out). The enzyme catalyses Mg(2+)(in) = Mg(2+)(out). It catalyses the reaction K(+)(in) = K(+)(out). The catalysed reaction is Na(+)(in) = Na(+)(out). With respect to regulation, activated by a myriad of ligands such as acetylcholine. AChR activity is inhibited by the antagonist alpha-conotoxins RgIA and GeXXA, small disulfide-constrained peptides from cone snails. In terms of biological role, component of neuronal acetylcholine receptors (nAChRs) that function as pentameric, ligand-gated cation channels with high calcium permeability among other activities. nAChRs are excitatory neurotrasnmitter receptors formed by a collection of nAChR subunits known to mediate synaptic transmission in the nervous system and the neuromuscular junction. Each nAchR subunit confers differential attributes to channel properties, including activation, deactivation and desensitization kinetics, pH sensitivity, cation permeability, and binding to allosteric modulators. Forms either homopentamers or heteropentamers with CHRNA10. Expressed in the inner ear, in sympathetic neurons and in other non-neuronal cells, such as skin keratinocytes and lymphocytes. nAChR formed by CHRNA9:CHRNA10 mediate central nervous system control of auditory and vestibular sensory processing. The channel is permeable to a range of divalent cations including calcium, the influx of which may activate a potassium current which hyperpolarizes the cell membrane. In the ear, mediates synaptic transmission between efferent olivocochlear fibers and hair cells of the cochlea, this may lead to a reduction in basilar membrane motion, altering the activity of auditory nerve fibers and reducing the range of dynamic hearing. This may protect against acoustic trauma. May also regulate keratinocyte adhesion. In Rattus norvegicus (Rat), this protein is Neuronal acetylcholine receptor subunit alpha-9 (Chrna9).